The primary structure comprises 405 residues: Probable tRNA sulfurtransferase (405 aa).

In terms of domain architecture, THUMP spans 60–165 (ETIDQRLKLV…QDAIYISNQL (106 aa)). Residues 183 to 184 (ML), 208 to 209 (HF), arginine 265, glycine 287, and glutamine 296 each bind ATP.

Belongs to the ThiI family.

The protein localises to the cytoplasm. The enzyme catalyses [ThiI sulfur-carrier protein]-S-sulfanyl-L-cysteine + a uridine in tRNA + 2 reduced [2Fe-2S]-[ferredoxin] + ATP + H(+) = [ThiI sulfur-carrier protein]-L-cysteine + a 4-thiouridine in tRNA + 2 oxidized [2Fe-2S]-[ferredoxin] + AMP + diphosphate. It carries out the reaction [ThiS sulfur-carrier protein]-C-terminal Gly-Gly-AMP + S-sulfanyl-L-cysteinyl-[cysteine desulfurase] + AH2 = [ThiS sulfur-carrier protein]-C-terminal-Gly-aminoethanethioate + L-cysteinyl-[cysteine desulfurase] + A + AMP + 2 H(+). It participates in cofactor biosynthesis; thiamine diphosphate biosynthesis. Its function is as follows. Catalyzes the ATP-dependent transfer of a sulfur to tRNA to produce 4-thiouridine in position 8 of tRNAs, which functions as a near-UV photosensor. Also catalyzes the transfer of sulfur to the sulfur carrier protein ThiS, forming ThiS-thiocarboxylate. This is a step in the synthesis of thiazole, in the thiamine biosynthesis pathway. The sulfur is donated as persulfide by IscS. This chain is Probable tRNA sulfurtransferase, found in Lactobacillus johnsonii (strain CNCM I-12250 / La1 / NCC 533).